A 327-amino-acid polypeptide reads, in one-letter code: MAAAAAMAEQESARNGGRNRGGVQRVEGKLRASVEKGDYYEAHQMYRTLFFRYMSQSKHTEARELMYSGALLFFSHGQQNSAADLSMLVLESLEKAEVEVADELLENLAKVFSLMDPNSPERVTFVSRALKWSSGGSGKLGHPRLHQLLALTLWKEQNYCESRYHFLHSADGEGCANMLVEYSTSRGFRSEVDMFVAQAVLQFLCLKNKSSASVVFTTYTQKHPSIEDGPPFVEPLLNFIWFLLLAVDGGKLTVFTVLCEQYQPSLRRDPMYNEYLDRIGQLFFGVPPKQTSSYGGLLGNLLTSLMGSSEQEDGEESPSDGSPIELD.

Ala-2 carries the N-acetylalanine modification. Ser-12 bears the Phosphoserine mark. Residues 195–271 (FVAQAVLQFL…YQPSLRRDPM (77 aa)) form an interacts with BAG6 region. The interval 307-327 (GSSEQEDGEESPSDGSPIELD) is disordered.

This sequence belongs to the GET4 family. As to quaternary structure, component of the BAG6/BAT3 complex, at least composed of BAG6, UBL4A and GET4/TRC35. Interacts with BAG6; the interaction is direct and localizes BAG6 to the cytosol. Interacts with GET3. In terms of processing, ubiquitinated by RNF12, leading to proteasomal degradation. When unassembled from BAG6; ubiquitinylation is modulated by BAG6 quality control role and effectuated by RNF126.

It is found in the cytoplasm. The protein resides in the cytosol. Functionally, as part of a cytosolic protein quality control complex, the BAG6/BAT3 complex, maintains misfolded and hydrophobic patches-containing proteins in a soluble state and participates in their proper delivery to the endoplasmic reticulum or alternatively can promote their sorting to the proteasome where they undergo degradation. The BAG6/BAT3 complex is involved in the post-translational delivery of tail-anchored/type II transmembrane proteins to the endoplasmic reticulum membrane. Recruited to ribosomes, it interacts with the transmembrane region of newly synthesized tail-anchored proteins and together with SGTA and ASNA1 mediates their delivery to the endoplasmic reticulum. Client proteins that cannot be properly delivered to the endoplasmic reticulum are ubiquitinated and sorted to the proteasome. Similarly, the BAG6/BAT3 complex also functions as a sorting platform for proteins of the secretory pathway that are mislocalized to the cytosol either delivering them to the proteasome for degradation or to the endoplasmic reticulum. The BAG6/BAT3 complex also plays a role in the endoplasmic reticulum-associated degradation (ERAD), a quality control mechanism that eliminates unwanted proteins of the endoplasmic reticulum through their retrotranslocation to the cytosol and their targeting to the proteasome. It maintains these retrotranslocated proteins in an unfolded yet soluble state condition in the cytosol to ensure their proper delivery to the proteasome. The sequence is that of Golgi to ER traffic protein 4 homolog from Homo sapiens (Human).